A 373-amino-acid chain; its full sequence is Queuine tRNA-ribosyltransferase (373 aa).

Asp89 (proton acceptor) is an active-site residue. Substrate is bound by residues 89-93, Asp143, Gln187, and Gly214; that span reads DSGGF. Positions 245 to 251 are RNA binding; sequence GVGKPED. The active-site Nucleophile is Asp264. Residues 269–273 are RNA binding; important for wobble base 34 recognition; it reads TRNAR. The Zn(2+) site is built by Cys302, Cys304, Cys307, and His333.

It belongs to the queuine tRNA-ribosyltransferase family. Homodimer. Within each dimer, one monomer is responsible for RNA recognition and catalysis, while the other monomer binds to the replacement base PreQ1. Zn(2+) serves as cofactor.

It carries out the reaction 7-aminomethyl-7-carbaguanine + guanosine(34) in tRNA = 7-aminomethyl-7-carbaguanosine(34) in tRNA + guanine. Its pathway is tRNA modification; tRNA-queuosine biosynthesis. Functionally, catalyzes the base-exchange of a guanine (G) residue with the queuine precursor 7-aminomethyl-7-deazaguanine (PreQ1) at position 34 (anticodon wobble position) in tRNAs with GU(N) anticodons (tRNA-Asp, -Asn, -His and -Tyr). Catalysis occurs through a double-displacement mechanism. The nucleophile active site attacks the C1' of nucleotide 34 to detach the guanine base from the RNA, forming a covalent enzyme-RNA intermediate. The proton acceptor active site deprotonates the incoming PreQ1, allowing a nucleophilic attack on the C1' of the ribose to form the product. After dissociation, two additional enzymatic reactions on the tRNA convert PreQ1 to queuine (Q), resulting in the hypermodified nucleoside queuosine (7-(((4,5-cis-dihydroxy-2-cyclopenten-1-yl)amino)methyl)-7-deazaguanosine). This chain is Queuine tRNA-ribosyltransferase, found in Tolumonas auensis (strain DSM 9187 / NBRC 110442 / TA 4).